Consider the following 594-residue polypeptide: Zinc finger protein 467 (594 aa).

The segment at Met-1–Met-70 is disordered. A Glycyl lysine isopeptide (Lys-Gly) (interchain with G-Cter in SUMO2) cross-link involves residue Lys-97. 12 C2H2-type zinc fingers span residues Tyr-160 to His-182, Cys-188 to His-210, Phe-216 to His-238, Tyr-244 to His-266, Phe-272 to His-294, Tyr-300 to His-322, Phe-355 to His-377, Phe-430 to His-452, Phe-458 to His-480, Phe-486 to His-508, His-514 to His-536, and Phe-542 to His-564. Residues Gln-313–Thr-350 form a disordered region. Lys-368 is covalently cross-linked (Glycyl lysine isopeptide (Lys-Gly) (interchain with G-Cter in SUMO2)).

The protein belongs to the krueppel C2H2-type zinc-finger protein family. As to quaternary structure, interacts with STAT3. Enhances STAT3 activity by keeping it in the nucleus.

The protein resides in the nucleus. In terms of biological role, transcription factor that promotes adipocyte differentiation and suppresses osteoblast differentiation in the bone marrow. Enhances the osteoclast-supporting ability of stromal cells. Binds with STAT3 the consensus sequence 5'-CTTCTGGGAAGA-3' of the acute phase response element (APRE). Transactivates several promoters including FOS, OSM and PPARG. Recruits a histone deacetylase complex. The chain is Zinc finger protein 467 (Znf467) from Rattus norvegicus (Rat).